The sequence spans 329 residues: DNA-directed RNA polymerase subunit alpha (329 aa).

Residues 1 to 232 are alpha N-terminal domain (alpha-NTD); it reads MQEMLEQLLT…YQLIAFVDLK (232 aa). The alpha C-terminal domain (alpha-CTD) stretch occupies residues 246–329; sequence FDPIFLQPVD…PSSLVSKESA (84 aa).

The protein belongs to the RNA polymerase alpha chain family. As to quaternary structure, homodimer. The RNAP catalytic core consists of 2 alpha, 1 beta, 1 beta' and 1 omega subunit. When a sigma factor is associated with the core the holoenzyme is formed, which can initiate transcription.

It catalyses the reaction RNA(n) + a ribonucleoside 5'-triphosphate = RNA(n+1) + diphosphate. Its function is as follows. DNA-dependent RNA polymerase catalyzes the transcription of DNA into RNA using the four ribonucleoside triphosphates as substrates. The sequence is that of DNA-directed RNA polymerase subunit alpha from Hydrogenovibrio crunogenus (strain DSM 25203 / XCL-2) (Thiomicrospira crunogena).